The following is a 284-amino-acid chain: Bifunctional protein FolD (284 aa).

NADP(+)-binding positions include Gly166–Ser168, Ser191, and Ile232.

It belongs to the tetrahydrofolate dehydrogenase/cyclohydrolase family. In terms of assembly, homodimer.

It catalyses the reaction (6R)-5,10-methylene-5,6,7,8-tetrahydrofolate + NADP(+) = (6R)-5,10-methenyltetrahydrofolate + NADPH. The enzyme catalyses (6R)-5,10-methenyltetrahydrofolate + H2O = (6R)-10-formyltetrahydrofolate + H(+). The protein operates within one-carbon metabolism; tetrahydrofolate interconversion. Catalyzes the oxidation of 5,10-methylenetetrahydrofolate to 5,10-methenyltetrahydrofolate and then the hydrolysis of 5,10-methenyltetrahydrofolate to 10-formyltetrahydrofolate. This is Bifunctional protein FolD from Neisseria meningitidis serogroup A / serotype 4A (strain DSM 15465 / Z2491).